Consider the following 239-residue polypeptide: MLTKEQLQHLKNELEQTKKDILNRFKDNDHFQLNSAFPYDSWGELSAYDNHPGDQATELYEREKDIALDLHEREHLRDIEHSLKAIENGTYGICEVSGKEIPFERLEALPTATTLAEYSSQDVVSKDRPIEEETPFGQFEFDDDEEIRAPYDSEDSYQDVEKYGNSQTPQDMENPPLSYDDMTMNAEENIGNTESYENFIATDITGKEITVYQSRAHERYEEELDEEGIMTTFGDLHAD.

Residues 94–114 (CEVSGKEIPFERLEALPTATT) form a dksA C4-type; degenerate zinc finger. Residues 133 to 158 (ETPFGQFEFDDDEEIRAPYDSEDSYQ) are compositionally biased toward acidic residues. Residues 133 to 182 (ETPFGQFEFDDDEEIRAPYDSEDSYQDVEKYGNSQTPQDMENPPLSYDDM) are disordered.

This is an uncharacterized protein from Bacillus subtilis (strain 168).